The primary structure comprises 212 residues: ATP-dependent dethiobiotin synthetase BioD (212 aa).

Residue 13–18 (GIGKTV) participates in ATP binding. Thr17 contributes to the Mg(2+) binding site. Lys33 is a catalytic residue. Ser37 is a binding site for substrate. Glu100 is a Mg(2+) binding site. Residues 100 to 103 (EGAG) and 184 to 186 (PRL) each bind ATP.

This sequence belongs to the dethiobiotin synthetase family. Homodimer. Mg(2+) is required as a cofactor.

Its subcellular location is the cytoplasm. The catalysed reaction is (7R,8S)-7,8-diammoniononanoate + CO2 + ATP = (4R,5S)-dethiobiotin + ADP + phosphate + 3 H(+). The protein operates within cofactor biosynthesis; biotin biosynthesis; biotin from 7,8-diaminononanoate: step 1/2. Its function is as follows. Catalyzes a mechanistically unusual reaction, the ATP-dependent insertion of CO2 between the N7 and N8 nitrogen atoms of 7,8-diaminopelargonic acid (DAPA, also called 7,8-diammoniononanoate) to form a ureido ring. This is ATP-dependent dethiobiotin synthetase BioD from Rhodopseudomonas palustris (strain TIE-1).